Reading from the N-terminus, the 642-residue chain is Threonine--tRNA ligase (642 aa).

Residues M1–T61 enclose the TGS domain. The segment at D243 to P534 is catalytic. Zn(2+) is bound by residues C334, H385, and H511.

It belongs to the class-II aminoacyl-tRNA synthetase family. Homodimer. It depends on Zn(2+) as a cofactor.

It is found in the cytoplasm. It carries out the reaction tRNA(Thr) + L-threonine + ATP = L-threonyl-tRNA(Thr) + AMP + diphosphate + H(+). Its function is as follows. Catalyzes the attachment of threonine to tRNA(Thr) in a two-step reaction: L-threonine is first activated by ATP to form Thr-AMP and then transferred to the acceptor end of tRNA(Thr). Also edits incorrectly charged L-seryl-tRNA(Thr). The sequence is that of Threonine--tRNA ligase from Shewanella denitrificans (strain OS217 / ATCC BAA-1090 / DSM 15013).